The following is a 1728-amino-acid chain: Lysophospholipase NTE1 (1728 aa).

The Cytoplasmic segment spans residues 1-44; that stretch reads MDSSSIAHESDIVSTERNILPERFISNKQQGNYLEDGSGDGNGK. The helical transmembrane segment at 45–65 threads the bilayer; sequence AAEHWLLAAIFNFFWVISYFI. The Lumenal portion of the chain corresponds to 66–97; the sequence is SGSTHIAFRSSWYIVSLLLLKFPKWIIVEANH. A helical membrane pass occupies residues 98–118; sequence IHLTIPFSVLVVTLAIIFYVS. Over 119–1728 the chain is Cytoplasmic; sequence YEFLKGRLLS…GFFLHRRNSI (1610 aa). Residues 141–150 show a composition bias toward low complexity; that stretch reads SLNSKNSKSS. Disordered regions lie at residues 141–167, 285–368, 406–436, 454–488, 596–660, and 687–756; these read SLNSKNSKSSRLLHHDSKDSNTTRRRR, RKKK…DEST, NDNVTSPSRTGRMDSNYTNPVERPTSKLSTS, TEASYRSTSNPSNNFSKDNDPLSKSISGPDAVTTP, NLQK…TGSR, and ASPS…FTSF. Over residues 153–162 the composition is skewed to basic and acidic residues; it reads LHHDSKDSNT. Composition is skewed to polar residues over residues 293–303 and 326–336; these read SRHGQYNNNSD and MRSSSRNQNIP. Over residues 345 to 367 the composition is skewed to acidic residues; sequence SSDEESDINDGDSESQSESDDES. 3 stretches are compositionally biased toward polar residues: residues 406–424, 454–479, and 599–609; these read NDNVTSPSRTGRMDSNYTN, TEASYRSTSNPSNNFSKDNDPLSKSI, and KGFQSPTSSRL. Positions 610-628 are enriched in low complexity; it reads TSNFNGNSNNQRTNSRNSQ. 2 stretches are compositionally biased toward polar residues: residues 642 to 657 and 729 to 756; these read ELSQQSSMIHSPTPIT and IYNNQSSSRSDALKGNNSNNKDINFTSF. A nucleoside 3',5'-cyclic phosphate is bound by residues 854-987 and 983-1121; these read SPTL…LTSL and SLTS…VAKK. The segment at 1034–1055 is disordered; that stretch reads PELEENSTDYPNDGEEKDSSRD. Residues 1036–1049 are compositionally biased toward acidic residues; the sequence is LEENSTDYPNDGEE. Positions 1422–1586 constitute a PNPLA domain; it reads LVLGGGGARG…VDNLPVLEMK (165 aa). The GXGXXG motif lies at 1426–1431; that stretch reads GGGARG. Positions 1453 to 1457 match the GXSXG motif; that stretch reads GTSIG. The Nucleophile role is filled by serine 1455. Catalysis depends on aspartate 1573, which acts as the Proton acceptor. Residues 1573 to 1575 carry the DGA/G motif; it reads DGG.

It belongs to the NTE family.

The protein resides in the endoplasmic reticulum membrane. It carries out the reaction a 1-acyl-sn-glycero-3-phosphocholine + H2O = sn-glycerol 3-phosphocholine + a fatty acid + H(+). With respect to regulation, inhibited by organophosphorus esters. Its function is as follows. Intracellular phospholipase B that catalyzes the double deacylation of phosphatidylcholine (PC) to glycerophosphocholine (GroPCho). Plays an important role in membrane lipid homeostasis. Responsible for the rapid PC turnover in response to inositol, elevated temperatures, or when choline is present in the growth medium. This chain is Lysophospholipase NTE1 (NTE1), found in Candida glabrata (strain ATCC 2001 / BCRC 20586 / JCM 3761 / NBRC 0622 / NRRL Y-65 / CBS 138) (Yeast).